The following is a 136-amino-acid chain: Small ribosomal subunit protein uS9 (136 aa).

This sequence belongs to the universal ribosomal protein uS9 family.

This Borreliella afzelii (strain PKo) (Borrelia afzelii) protein is Small ribosomal subunit protein uS9.